A 253-amino-acid polypeptide reads, in one-letter code: Imidazole glycerol phosphate synthase subunit HisF (253 aa).

Catalysis depends on residues D11 and D130.

This sequence belongs to the HisA/HisF family. As to quaternary structure, heterodimer of HisH and HisF.

The protein localises to the cytoplasm. It carries out the reaction 5-[(5-phospho-1-deoxy-D-ribulos-1-ylimino)methylamino]-1-(5-phospho-beta-D-ribosyl)imidazole-4-carboxamide + L-glutamine = D-erythro-1-(imidazol-4-yl)glycerol 3-phosphate + 5-amino-1-(5-phospho-beta-D-ribosyl)imidazole-4-carboxamide + L-glutamate + H(+). Its pathway is amino-acid biosynthesis; L-histidine biosynthesis; L-histidine from 5-phospho-alpha-D-ribose 1-diphosphate: step 5/9. IGPS catalyzes the conversion of PRFAR and glutamine to IGP, AICAR and glutamate. The HisF subunit catalyzes the cyclization activity that produces IGP and AICAR from PRFAR using the ammonia provided by the HisH subunit. The chain is Imidazole glycerol phosphate synthase subunit HisF from Thermoanaerobacter sp. (strain X514).